Here is a 207-residue protein sequence, read N- to C-terminus: Large ribosomal subunit protein uL4 (207 aa).

Residues 49–75 (HAVKNRSAVSGGGRKPWKQKGTGRARA) are disordered.

Belongs to the universal ribosomal protein uL4 family. As to quaternary structure, part of the 50S ribosomal subunit.

One of the primary rRNA binding proteins, this protein initially binds near the 5'-end of the 23S rRNA. It is important during the early stages of 50S assembly. It makes multiple contacts with different domains of the 23S rRNA in the assembled 50S subunit and ribosome. Functionally, forms part of the polypeptide exit tunnel. The chain is Large ribosomal subunit protein uL4 from Leuconostoc mesenteroides subsp. mesenteroides (strain ATCC 8293 / DSM 20343 / BCRC 11652 / CCM 1803 / JCM 6124 / NCDO 523 / NBRC 100496 / NCIMB 8023 / NCTC 12954 / NRRL B-1118 / 37Y).